The following is a 567-amino-acid chain: Dihydroxy-acid dehydratase 3 (567 aa).

C57 provides a ligand contact to [2Fe-2S] cluster. A Mg(2+)-binding site is contributed by D89. Position 130 (C130) interacts with [2Fe-2S] cluster. Positions 131 and 132 each coordinate Mg(2+). K132 carries the post-translational modification N6-carboxylysine. C202 serves as a coordination point for [2Fe-2S] cluster. E454 is a Mg(2+) binding site. Residue S480 is the Proton acceptor of the active site.

This sequence belongs to the IlvD/Edd family. As to quaternary structure, homodimer. [2Fe-2S] cluster serves as cofactor. Mg(2+) is required as a cofactor.

The enzyme catalyses (2R)-2,3-dihydroxy-3-methylbutanoate = 3-methyl-2-oxobutanoate + H2O. It carries out the reaction (2R,3R)-2,3-dihydroxy-3-methylpentanoate = (S)-3-methyl-2-oxopentanoate + H2O. The protein operates within amino-acid biosynthesis; L-isoleucine biosynthesis; L-isoleucine from 2-oxobutanoate: step 3/4. It functions in the pathway amino-acid biosynthesis; L-valine biosynthesis; L-valine from pyruvate: step 3/4. In terms of biological role, functions in the biosynthesis of branched-chain amino acids. Catalyzes the dehydration of (2R,3R)-2,3-dihydroxy-3-methylpentanoate (2,3-dihydroxy-3-methylvalerate) into 2-oxo-3-methylpentanoate (2-oxo-3-methylvalerate) and of (2R)-2,3-dihydroxy-3-methylbutanoate (2,3-dihydroxyisovalerate) into 2-oxo-3-methylbutanoate (2-oxoisovalerate), the penultimate precursor to L-isoleucine and L-valine, respectively. The protein is Dihydroxy-acid dehydratase 3 of Aromatoleum aromaticum (strain DSM 19018 / LMG 30748 / EbN1) (Azoarcus sp. (strain EbN1)).